A 439-amino-acid chain; its full sequence is Fibroleukin (439 aa).

Residues 1-23 (MKLANWYWLSSAVLATYGFLVVA) form the signal peptide. N-linked (GlcNAc...) asparagine glycosylation is present at Asn-25. Positions 73 to 165 (SRIEEVFKEV…GRLEKLNLVN (93 aa)) form a coiled coil. The interval 103-126 (ADDNGDPGRNGLLLPSTGAPGEVG) is disordered. Residues Asn-179, Asn-235, Asn-263, and Asn-336 are each glycosylated (N-linked (GlcNAc...) asparagine). One can recognise a Fibrinogen C-terminal domain in the interval 204 to 436 (PVQHLIYKDC…EAKMMIRPKH (233 aa)). An intrachain disulfide couples Cys-213 to Cys-242. A disulfide bridge links Cys-371 with Cys-384.

As to quaternary structure, homotetramer; disulfide-linked. In terms of tissue distribution, constitutively expressed in cytotoxic T-cells.

The protein resides in the secreted. In terms of biological role, may play a role in physiologic lymphocyte functions at mucosal sites. The sequence is that of Fibroleukin (FGL2) from Homo sapiens (Human).